The chain runs to 214 residues: Thiamine-phosphate synthase (214 aa).

4-amino-2-methyl-5-(diphosphooxymethyl)pyrimidine is bound by residues 38 to 42 and Asn-70; that span reads QLREK. The Mg(2+) site is built by Asp-71 and Asp-90. 4-amino-2-methyl-5-(diphosphooxymethyl)pyrimidine is bound by residues Ser-109 and Lys-138. Position 165 (Gly-165) interacts with 2-[(2R,5Z)-2-carboxy-4-methylthiazol-5(2H)-ylidene]ethyl phosphate.

The protein belongs to the thiamine-phosphate synthase family. Mg(2+) is required as a cofactor.

The enzyme catalyses 2-[(2R,5Z)-2-carboxy-4-methylthiazol-5(2H)-ylidene]ethyl phosphate + 4-amino-2-methyl-5-(diphosphooxymethyl)pyrimidine + 2 H(+) = thiamine phosphate + CO2 + diphosphate. The catalysed reaction is 2-(2-carboxy-4-methylthiazol-5-yl)ethyl phosphate + 4-amino-2-methyl-5-(diphosphooxymethyl)pyrimidine + 2 H(+) = thiamine phosphate + CO2 + diphosphate. It carries out the reaction 4-methyl-5-(2-phosphooxyethyl)-thiazole + 4-amino-2-methyl-5-(diphosphooxymethyl)pyrimidine + H(+) = thiamine phosphate + diphosphate. The protein operates within cofactor biosynthesis; thiamine diphosphate biosynthesis; thiamine phosphate from 4-amino-2-methyl-5-diphosphomethylpyrimidine and 4-methyl-5-(2-phosphoethyl)-thiazole: step 1/1. Condenses 4-methyl-5-(beta-hydroxyethyl)thiazole monophosphate (THZ-P) and 2-methyl-4-amino-5-hydroxymethyl pyrimidine pyrophosphate (HMP-PP) to form thiamine monophosphate (TMP). The protein is Thiamine-phosphate synthase of Caldanaerobacter subterraneus subsp. tengcongensis (strain DSM 15242 / JCM 11007 / NBRC 100824 / MB4) (Thermoanaerobacter tengcongensis).